The primary structure comprises 479 residues: T-box transcription factor TBX1 (479 aa).

Composition is skewed to low complexity over residues 15-31 (ASSL…ADPF) and 59-86 (YPFA…AAAV). The interval 15–86 (ASSLSGLGSP…GPGASRAAAV (72 aa)) is disordered. Residues 108 to 286 (LWDEFNQLGT…SNPFAKGFRD (179 aa)) constitute a DNA-binding region (T-box). Residues 311–398 (RNPVASPTQP…APGASEPLHH (88 aa)) form a disordered region. The span at 313–322 (PVASPTQPNG) shows a compositional bias: polar residues. A compositionally biased stretch (basic and acidic residues) spans 323 to 338 (SDKDAAEARREFDRDS). The Nuclear localization signal motif lies at 415–426 (KSRPAPYPLPGL).

As to quaternary structure, binds DNA as a dimer. Interacts with DSCR6. Interacts with NKX2-5. As to expression, expressed in skeletal muscle, lung and testis. Highly expressed in hair follicle stem cell, but not in terminally differentiating cells.

The protein localises to the nucleus. Its function is as follows. Transcription factor that plays a key role in cardiovascular development by promoting pharyngeal arch segmentation during embryonic development. Also involved in craniofacial muscle development. Together with NKX2-5, acts as a regulator of asymmetric cardiac morphogenesis by promoting expression of PITX2. Acts upstream of TBX1 for the formation of the thymus and parathyroid glands from the third pharyngeal pouch. Required for hair follicle stem cell self-renewal. Binds to the palindromic T site 5'-TTCACACCTAGGTGTGAA-3' DNA sequence. This Mus musculus (Mouse) protein is T-box transcription factor TBX1.